Consider the following 57-residue polypeptide: UPF0391 membrane protein RPB_2024 (57 aa).

The next 2 helical transmembrane spans lie at 4 to 24 (WVVTFLVVALIAGLLGFGGIA) and 30 to 50 (IAKVIFFIAIVLFLVSAVVGL).

This sequence belongs to the UPF0391 family.

The protein resides in the cell membrane. This chain is UPF0391 membrane protein RPB_2024, found in Rhodopseudomonas palustris (strain HaA2).